The following is a 62-amino-acid chain: UPF0370 protein ESA_00777 (62 aa).

The helical transmembrane segment at leucine 4–isoleucine 24 threads the bilayer. The span at methionine 36–lysine 51 shows a compositional bias: basic and acidic residues. The tract at residues methionine 36–lysine 62 is disordered. Residues tryptophan 52–lysine 62 are compositionally biased toward acidic residues.

Belongs to the UPF0370 family.

Its subcellular location is the cell membrane. This chain is UPF0370 protein ESA_00777, found in Cronobacter sakazakii (strain ATCC BAA-894) (Enterobacter sakazakii).